We begin with the raw amino-acid sequence, 131 residues long: Fluoride-specific ion channel FluC 1 (131 aa).

4 helical membrane-spanning segments follow: residues 4–24 (ILLI…LSGW), 32–52 (FPLG…LVMY), 66–86 (ILLT…SYES), and 95–115 (LMQL…AVYL). Residues Gly-74 and Thr-77 each contribute to the Na(+) site.

Belongs to the fluoride channel Fluc/FEX (TC 1.A.43) family.

The protein resides in the cell membrane. The catalysed reaction is fluoride(in) = fluoride(out). Its activity is regulated as follows. Na(+) is not transported, but it plays an essential structural role and its presence is essential for fluoride channel function. Fluoride-specific ion channel. Important for reducing fluoride concentration in the cell, thus reducing its toxicity. This is Fluoride-specific ion channel FluC 1 from Methanosarcina acetivorans (strain ATCC 35395 / DSM 2834 / JCM 12185 / C2A).